The following is a 436-amino-acid chain: 3-ketoacyl-CoA thiolase (436 aa).

The active-site Acyl-thioester intermediate is Cys99. Active-site proton acceptor residues include His392 and Cys422.

This sequence belongs to the thiolase-like superfamily. Thiolase family. As to quaternary structure, heterotetramer of two alpha chains (FadJ) and two beta chains (FadI).

It is found in the cytoplasm. It carries out the reaction an acyl-CoA + acetyl-CoA = a 3-oxoacyl-CoA + CoA. The protein operates within lipid metabolism; fatty acid beta-oxidation. Functionally, catalyzes the final step of fatty acid oxidation in which acetyl-CoA is released and the CoA ester of a fatty acid two carbons shorter is formed. This is 3-ketoacyl-CoA thiolase from Alteromonas mediterranea (strain DSM 17117 / CIP 110805 / LMG 28347 / Deep ecotype).